We begin with the raw amino-acid sequence, 208 residues long: Large ribosomal subunit protein uL4 (208 aa).

A disordered region spans residues 50–83; sequence VKTRAEVSGGGRKPWKQKGTGRARQGSIRAPQWK.

Belongs to the universal ribosomal protein uL4 family. Part of the 50S ribosomal subunit.

Its function is as follows. One of the primary rRNA binding proteins, this protein initially binds near the 5'-end of the 23S rRNA. It is important during the early stages of 50S assembly. It makes multiple contacts with different domains of the 23S rRNA in the assembled 50S subunit and ribosome. Functionally, forms part of the polypeptide exit tunnel. This is Large ribosomal subunit protein uL4 from Mycoplasma mycoides subsp. mycoides SC (strain CCUG 32753 / NCTC 10114 / PG1).